A 344-amino-acid polypeptide reads, in one-letter code: Phenylalanine--tRNA ligase alpha subunit (344 aa).

E259 provides a ligand contact to Mg(2+).

The protein belongs to the class-II aminoacyl-tRNA synthetase family. Phe-tRNA synthetase alpha subunit type 1 subfamily. As to quaternary structure, tetramer of two alpha and two beta subunits. Requires Mg(2+) as cofactor.

Its subcellular location is the cytoplasm. The catalysed reaction is tRNA(Phe) + L-phenylalanine + ATP = L-phenylalanyl-tRNA(Phe) + AMP + diphosphate + H(+). The chain is Phenylalanine--tRNA ligase alpha subunit from Nitrosospira multiformis (strain ATCC 25196 / NCIMB 11849 / C 71).